Here is a 483-residue protein sequence, read N- to C-terminus: Altronate oxidoreductase (483 aa).

NAD(+) is bound at residue 18–29 (IIQFGEGNFLRA).

Belongs to the mannitol dehydrogenase family. UxaB subfamily.

The catalysed reaction is D-altronate + NAD(+) = keto-D-tagaturonate + NADH + H(+). It participates in carbohydrate metabolism; pentose and glucuronate interconversion. The protein is Altronate oxidoreductase of Escherichia coli (strain 55989 / EAEC).